The sequence spans 745 residues: 5-methyltetrahydropteroyltriglutamate--homocysteine methyltransferase (745 aa).

Residues 16-19 and Lys110 contribute to the 5-methyltetrahydropteroyltri-L-glutamate site; that span reads REWK. Residues 420–422 and Glu473 contribute to the L-homocysteine site; that span reads IGS. Residues 420–422 and Glu473 contribute to the L-methionine site; that span reads IGS. Residue Trp550 participates in 5-methyltetrahydropteroyltri-L-glutamate binding. Asp588 provides a ligand contact to L-homocysteine. Asp588 is an L-methionine binding site. Glu594 serves as a coordination point for 5-methyltetrahydropteroyltri-L-glutamate. Residues His630, Cys632, and Glu654 each contribute to the Zn(2+) site. Catalysis depends on His683, which acts as the Proton donor. Cys715 provides a ligand contact to Zn(2+).

It belongs to the vitamin-B12 independent methionine synthase family. The cofactor is Zn(2+).

The catalysed reaction is 5-methyltetrahydropteroyltri-L-glutamate + L-homocysteine = tetrahydropteroyltri-L-glutamate + L-methionine. It participates in amino-acid biosynthesis; L-methionine biosynthesis via de novo pathway; L-methionine from L-homocysteine (MetE route): step 1/1. Its function is as follows. Catalyzes the transfer of a methyl group from 5-methyltetrahydrofolate to homocysteine resulting in methionine formation. In Streptococcus agalactiae serotype III (strain NEM316), this protein is 5-methyltetrahydropteroyltriglutamate--homocysteine methyltransferase.